The following is a 200-amino-acid chain: Holliday junction branch migration complex subunit RuvA (200 aa).

The tract at residues 1–65 (MYEYIKGTLT…ETEHVLYGFS (65 aa)) is domain I. Residues 66-144 (SRAEKECFRL…TLMPLYLEEP (79 aa)) form a domain II region. Residues 145-149 (VVPSS) form a flexible linker region. Residues 150-200 (TANSSFKEGIGALMNLGFSRLAADRMMTEAVKELSEEASVAELLPIALRKS) are domain III.

This sequence belongs to the RuvA family. As to quaternary structure, homotetramer. Forms an RuvA(8)-RuvB(12)-Holliday junction (HJ) complex. HJ DNA is sandwiched between 2 RuvA tetramers; dsDNA enters through RuvA and exits via RuvB. An RuvB hexamer assembles on each DNA strand where it exits the tetramer. Each RuvB hexamer is contacted by two RuvA subunits (via domain III) on 2 adjacent RuvB subunits; this complex drives branch migration. In the full resolvosome a probable DNA-RuvA(4)-RuvB(12)-RuvC(2) complex forms which resolves the HJ.

It is found in the cytoplasm. The RuvA-RuvB-RuvC complex processes Holliday junction (HJ) DNA during genetic recombination and DNA repair, while the RuvA-RuvB complex plays an important role in the rescue of blocked DNA replication forks via replication fork reversal (RFR). RuvA specifically binds to HJ cruciform DNA, conferring on it an open structure. The RuvB hexamer acts as an ATP-dependent pump, pulling dsDNA into and through the RuvAB complex. HJ branch migration allows RuvC to scan DNA until it finds its consensus sequence, where it cleaves and resolves the cruciform DNA. This is Holliday junction branch migration complex subunit RuvA from Chlamydia trachomatis serovar A (strain ATCC VR-571B / DSM 19440 / HAR-13).